The following is a 144-amino-acid chain: Deoxyuridine 5'-triphosphate nucleotidohydrolase (144 aa).

Substrate is bound by residues 63–65 (RSG), N76, and 80–82 (TID).

The protein belongs to the dUTPase family. Mg(2+) serves as cofactor.

The catalysed reaction is dUTP + H2O = dUMP + diphosphate + H(+). It participates in pyrimidine metabolism; dUMP biosynthesis; dUMP from dCTP (dUTP route): step 2/2. In terms of biological role, this enzyme is involved in nucleotide metabolism: it produces dUMP, the immediate precursor of thymidine nucleotides and it decreases the intracellular concentration of dUTP so that uracil cannot be incorporated into DNA. The protein is Deoxyuridine 5'-triphosphate nucleotidohydrolase of Porphyromonas gingivalis (strain ATCC BAA-308 / W83).